A 198-amino-acid chain; its full sequence is Eukaryotic translation initiation factor isoform 4E (198 aa).

The tract at residues 1–25 (MATDDVNEPLPAAAELPATEAEKQP) is disordered. The residue at position 2 (alanine 2) is an N-acetylalanine. Residues 8 to 19 (EPLPAAAELPAT) are compositionally biased toward low complexity. MRNA is bound by residues 46-47 (WG) and 92-93 (WE). Residues cysteine 97 and cysteine 138 are joined by a disulfide bond. 145-152 (RPQSKQDK) provides a ligand contact to mRNA.

This sequence belongs to the eukaryotic initiation factor 4E family. In terms of assembly, EIF4F is a multi-subunit complex, the composition of which varies with external and internal environmental conditions. It is composed of at least EIF4A, EIF4E and EIF4G. EIF4E is also known to interact with other partners. In higher plants two isoforms of EIF4F have been identified, named isoform EIF4F and isoform EIF(iso)4F. Isoform EIF4F has subunits p220 and p26, whereas isoform EIF(iso)4F has subunits p82 and p28. This isoform interacts with the viral protein genome linked (VPg)-proteinase of turnip mosaic potyvirus. Interacts directly with LOX2. Interacts with BTF3. According to the redox status, the Cys-97-Cys-138 disulfide bridge may have a role in regulating protein function by affecting its ability to bind capped mRNA. In terms of tissue distribution, abundant in floral organs and in young developing tissues.

Recognizes and binds the 7-methylguanosine-containing mRNA cap during an early step in the initiation of protein synthesis and facilitates ribosome binding by inducing the unwinding of the mRNAs secondary structures. Mediates susceptibility to Turnipmosaic potyvirus (TuMV) and Tobacco etch potyvirus (TEV). This chain is Eukaryotic translation initiation factor isoform 4E (EIF(ISO)4E), found in Arabidopsis thaliana (Mouse-ear cress).